Reading from the N-terminus, the 1140-residue chain is Squamosa promoter-binding-like protein 15 (1140 aa).

2 disordered regions span residues 73-112 (RVNA…LNLQ) and 124-177 (DVSP…GGNS). 2 stretches are compositionally biased toward low complexity: residues 76 to 100 (AGLS…EALR) and 125 to 135 (VSPAATTVSSS). Residues 164–177 (ASGGGGGGGGGGNS) show a composition bias toward gly residues. The segment at 184–261 (YPMCQVDDCR…AGHNRRRRKT (78 aa)) adopts an SBP-type zinc-finger fold. Zn(2+) is bound by residues Cys187, Cys192, Cys209, His212, Cys228, Cys231, His235, and Cys247. The short motif at 244 to 260 (KRSCRRRLAGHNRRRRK) is the Bipartite nuclear localization signal element. Disordered regions lie at residues 327-382 (NNGN…ADGF), 403-472 (TSNP…TPPY), 496-517 (LSSE…PVTH), and 558-597 (KDSE…DGQD). The span at 345–375 (ASHSQQQDSVQRTTNGFEKQTNGLDKQTNGF) shows a compositional bias: polar residues. The span at 403-430 (TSNPDSNTSQSQGSSDSSGNNKSKSQST) shows a compositional bias: low complexity. Residues 450–466 (RKNDALERSPEMYKQPD) show a composition bias toward basic and acidic residues. Polar residues predominate over residues 496–514 (LSSESSNPLDERSPSSSPP). Residues 579–593 (TSTSCSDHSPSTSNS) are compositionally biased toward low complexity.

Expressed in stems, leaf sheaths, and young panicles.

The protein resides in the nucleus. In terms of biological role, trans-acting factor that binds specifically to the consensus nucleotide sequence 5'-TNCGTACAA-3'. In Oryza sativa subsp. indica (Rice), this protein is Squamosa promoter-binding-like protein 15 (SPL15).